A 324-amino-acid chain; its full sequence is UDP-N-acetylenolpyruvoylglucosamine reductase (324 aa).

One can recognise an FAD-binding PCMH-type domain in the interval 36 to 217 (FRAGGLAELM…IRAEMDAVRA (182 aa)). R183 is a catalytic residue. S232 (proton donor) is an active-site residue. E302 is a catalytic residue.

The protein belongs to the MurB family. It depends on FAD as a cofactor.

Its subcellular location is the cytoplasm. The enzyme catalyses UDP-N-acetyl-alpha-D-muramate + NADP(+) = UDP-N-acetyl-3-O-(1-carboxyvinyl)-alpha-D-glucosamine + NADPH + H(+). The protein operates within cell wall biogenesis; peptidoglycan biosynthesis. Functionally, cell wall formation. This Rhizobium rhizogenes (strain K84 / ATCC BAA-868) (Agrobacterium radiobacter) protein is UDP-N-acetylenolpyruvoylglucosamine reductase.